The chain runs to 1792 residues: MKDNTHSTTLIFFGNEFPNDDLKGLFRCLLRLSKDRRFRQLAAFLEESTLVLKKEVAALPQPLRDLVPHFHTVLPLAELGDFRQGPLGAAMESALLTVLELGMFIGHYEAEGRDWNLLEHNTTLAGLSIGLLAAAGVALSTNLAEVAQNGAECVRVSFRLGVYVSEISRKLEAPQADGTLLSWAHVVTGETKSAIQDELSKYNSESGTPELLKVFISAADKTSVSVSGPPSRMKACFSSSHLLRYSKSFALPVYDGLCHASHLYNEDSINTVINSAESVIPVSRPVQLSLHSSNTGQPFPAATAHELFQAIGKELLTGTIYLDNIIDGIIKRIEGFNPSDLQVETFRTSIVFKSVRAALEGEFPDLEIKITDLIPWAFRDYGPRLPRSFAHSKLAVVGMACRMPGGGNDTELFWEILEQGRDVHTTVPADRFDLSTHYDPSGKTDNAATTPYGNFVDKPGLFDAGFFNMSPKEAEQTDPMQRLALVTAYEALEMAGVVPGRTASSNPKRIGTYYGQASDDWRELNASQNIGTYAVTGGVRAFGNGRINYYFKFPGPSFNVDTACSSGLAAVQVACSALWAGEADTVLAGGLNIITDPDNYAGLGCGHFLSKTGQCKVWDETADGYCRADGIGSVVIKRLEDAEADNDNIIAVVLSAATNHSAEAISITHPHAGNQKDNYRQVIDMAAVNPLDVSYIELHGTGTQAGDAVESESVLDVFAPRSPPRRPDQLLQLGAVKSNIGHGEAAAGIASFLKVLLMYQKNMIPAHIGIHTVINPTIPKDLEQRRVRLTQTNTPWPRLPGKKRIAMVNSFGAHGGNTTVLLEDAPERNKDVARENRSTHTVVISAKSKKSLQANIANLALHLEENPDIDLGDLSYTTCARRIHYTLRVGFAVSSIAGLKEALRKAGEKEALAEVRPTPGDVPPVVFAFTGQGAFYQGIARELFESFSYFRDEVLQLDHIVQRLGFQSIVPVIDGSIGENPSATVSQLSIVVIEIALAHLWTLLLGMQPSAVIGHSLGEYAALVVAGVLSTADGIFLAGRRAQLIEKCCTAGSHAMLSVRASVSEISKLLGNAKYEISCQNTLNDTVIGGTKANLDAARQVLESSSIKCVPVDVPFAFHTEQVDPVLDQLTRVAETVHFKAPSIPIISPLLRSVVFDGKTINSSYLIRATREPVHFAGAIEAAQDLGMVNDKTVWVDVGPHPICASFVRSLIPKARVASSCRRNEDNYATMAKNLVALHLAGCTPVWDEYFRANEKAYNLLTLPKYAWNDVNYWIQYIGTWTLDKAHLKYTGTNGPPQVKPSSSALRTSLIHEIIEETIGEETATLKTVSDLQHPEFLEAVHGHRMNNCGVATSSIWTDMSLTVGEYLYNKLAPGSKVHMNVGELEVLHATVANPAKNCTQNLYLDAHLDLRTQKMSLAWFNVDPATGSKAAESYATGSVRFEADAEKWKSEWERLTHLVLGRIETLESMAKDGQASQLSKALSYALFKNVVDYADHYRGMERVVMHDYEAFCDIKLTPERRGMFHTPPHWIDSVSHLAGLIMNGSDASNTRDYFFVTPGYESFRLLAKLDPDVKYQSYVRMFPLPEANMYGGDLYILQDNQIIGMVGHFKFRRVPRLLMDRFFSAEAASKQSVAASASSAPKTATKHAPLPASKPAQAPAEPTPSSLPTVQAQNTSPPQQVTPSKPAMNGVKTPEEEKPGKADAEGPNGTTSQPEATGVVGQCLQLIANETGQSVNELTPDATFVQLGVDSLMSLVLSEKFRAELGLEVKSSLFLECPTVGDMMDWLEQYC.

The tract at residues M1–A395 is N-terminal acylcarrier protein transacylase domain (SAT). Residues H391 to D824 form the Ketosynthase family 3 (KS3) domain. Catalysis depends on for beta-ketoacyl synthase activity residues C564, H699, and H742. Residues V926 to C1243 are malonyl-CoA:ACP transacylase (MAT) domain. Residues T1308–S1625 form a product template (PT) domain region. Positions H1312 to E1447 are N-terminal hotdog fold. One can recognise a PKS/mFAS DH domain in the interval H1312–D1621. H1344 serves as the catalytic Proton acceptor; for dehydratase activity. Residues Q1475 to D1621 are C-terminal hotdog fold. D1533 functions as the Proton donor; for dehydratase activity in the catalytic mechanism. Residues V1634–A1649 are compositionally biased toward low complexity. The disordered stretch occupies residues V1634–E1716. Over residues T1664–P1684 the composition is skewed to polar residues. The span at T1694–A1705 shows a compositional bias: basic and acidic residues. Residues P1715–C1792 enclose the Carrier domain. O-(pantetheine 4'-phosphoryl)serine is present on S1752.

Pantetheine 4'-phosphate is required as a cofactor.

The enzyme catalyses holo-[ACP] + 8 malonyl-CoA + acetyl-CoA + 8 H(+) = 3,6,8,9-tetrahydroxy-1-oxo-3-(2-oxopropyl)-1,2,3,4-tetrahydroanthracene-2-carboxyl-[ACP] + 8 CO2 + 9 CoA + 2 H2O. Its pathway is secondary metabolite biosynthesis. Non-reducing polyketide synthase (NRPKS); part of the gene cluster that mediates the biosynthesis of asperthecin, an anthraquinone pigment. Catalyzes the formation of the aromatic polyketide from acetyl coenzyme A and seven malonyl coenzyme A molecules. Through its product template (PT) domain, catalyzes the cyclization of the polyketide backbone via C6-C11 aldolcondensation. Polyketide is subsequently hydrolyzed from the NRPKS by the action of the hydrolase aptB into endocrocin-9-anthrone. Endocrocin-9-anthrone is then oxidized into endocrocin by aptC. Endocrocin is likely to decarboxylate spontaneously to form emodin which explains why there is no decarboxylase in the asperthecin biosynthesis cluster. Finally, aptC or another endogenous oxygenase catalyzes additional oxidation steps to form asperthecin. The protein is Non-reducing polyketide synthase aptA of Emericella nidulans (strain FGSC A4 / ATCC 38163 / CBS 112.46 / NRRL 194 / M139) (Aspergillus nidulans).